The primary structure comprises 129 residues: Small ribosomal subunit protein uS11 (129 aa).

Belongs to the universal ribosomal protein uS11 family. In terms of assembly, part of the 30S ribosomal subunit. Interacts with proteins S7 and S18. Binds to IF-3.

Located on the platform of the 30S subunit, it bridges several disparate RNA helices of the 16S rRNA. Forms part of the Shine-Dalgarno cleft in the 70S ribosome. In Bradyrhizobium sp. (strain BTAi1 / ATCC BAA-1182), this protein is Small ribosomal subunit protein uS11.